A 1015-amino-acid polypeptide reads, in one-letter code: Putative ankyrin repeat protein R96 (1015 aa).

Positions 1–14 are enriched in basic residues; that stretch reads MSTVKKSSKKKSSK. The segment at 1–37 is disordered; it reads MSTVKKSSKKKSSKKSSSGNESSKKSSPKIVPKHTAK. ANK repeat units lie at residues 136–165, 168–201, 202–231, 340–370, 374–403, 456–485, 498–527, and 535–564; these read NGHK…NIDF, APSN…AVNI, DGRS…DVEV, LGHN…DFQA, NITN…KIVS, SGYR…TIFA, NNND…QFQL, and TVPT…ITDC.

The sequence is that of Putative ankyrin repeat protein R96 from Acanthamoeba polyphaga mimivirus (APMV).